Reading from the N-terminus, the 506-residue chain is Maturase K (506 aa).

It belongs to the intron maturase 2 family. MatK subfamily.

It is found in the plastid. The protein localises to the chloroplast. Functionally, usually encoded in the trnK tRNA gene intron. Probably assists in splicing its own and other chloroplast group II introns. The protein is Maturase K of Atractylodes lancea (Atractylodes japonica).